Here is a 411-residue protein sequence, read N- to C-terminus: Secretion apparatus protein BsaZ (411 aa).

A run of 4 helical transmembrane segments spans residues 28–48 (IVALIVIATGALAAPALVDLT), 80–100 (IAAPFVLLCAAAGALPSLVQS), 137–157 (ALLYVGVFALTVRVFADLYHA), and 175–195 (IVLTVRLVLLFLLCALPVLIL). Residues 341–411 (AANRGGPPPE…APARTGDQNA (71 aa)) are disordered. Over residues 370–404 (DACADNAFPDDAPPGAAAPNAGSPDSPAPDGGAPA) the composition is skewed to low complexity.

Belongs to the type III secretion exporter family.

It is found in the cell membrane. Its function is as follows. Part of the bsa type III secretion system, is involved in the intracellular replication of invading bacteria inside the host cell. Probably necessary for the lysis of the vacuole membrane and escape into the host cell cytoplasm. The polypeptide is Secretion apparatus protein BsaZ (bsaZ) (Burkholderia pseudomallei (strain 1106a)).